The chain runs to 78 residues: Large ribosomal subunit protein bL28 (78 aa).

The tract at residues 1-25 (MARVCQVTGKRPMSGHHVSHANNKT) is disordered. The span at 13 to 25 (MSGHHVSHANNKT) shows a compositional bias: basic residues.

Belongs to the bacterial ribosomal protein bL28 family.

The sequence is that of Large ribosomal subunit protein bL28 from Nitrosomonas eutropha (strain DSM 101675 / C91 / Nm57).